Consider the following 189-residue polypeptide: Photosystem I assembly protein Ycf4 (189 aa).

Helical transmembrane passes span 29 to 49 (WATIVTLGASGFLLAGISSYL) and 69 to 89 (LVMGLYGAAGLLLATYLWLVI).

This sequence belongs to the Ycf4 family.

The protein resides in the cellular thylakoid membrane. Functionally, seems to be required for the assembly of the photosystem I complex. This is Photosystem I assembly protein Ycf4 from Nostoc punctiforme (strain ATCC 29133 / PCC 73102).